The chain runs to 297 residues: Lipoyl synthase (297 aa).

C37, C42, C48, C63, C67, C70, and S276 together coordinate [4Fe-4S] cluster. Residues 49-265 (WSRKHATVMI…ERIAKTKGFL (217 aa)) enclose the Radical SAM core domain.

Belongs to the radical SAM superfamily. Lipoyl synthase family. Requires [4Fe-4S] cluster as cofactor.

Its subcellular location is the cytoplasm. It catalyses the reaction [[Fe-S] cluster scaffold protein carrying a second [4Fe-4S](2+) cluster] + N(6)-octanoyl-L-lysyl-[protein] + 2 oxidized [2Fe-2S]-[ferredoxin] + 2 S-adenosyl-L-methionine + 4 H(+) = [[Fe-S] cluster scaffold protein] + N(6)-[(R)-dihydrolipoyl]-L-lysyl-[protein] + 4 Fe(3+) + 2 hydrogen sulfide + 2 5'-deoxyadenosine + 2 L-methionine + 2 reduced [2Fe-2S]-[ferredoxin]. Its pathway is protein modification; protein lipoylation via endogenous pathway; protein N(6)-(lipoyl)lysine from octanoyl-[acyl-carrier-protein]: step 2/2. Functionally, catalyzes the radical-mediated insertion of two sulfur atoms into the C-6 and C-8 positions of the octanoyl moiety bound to the lipoyl domains of lipoate-dependent enzymes, thereby converting the octanoylated domains into lipoylated derivatives. In Rickettsia prowazekii (strain Madrid E), this protein is Lipoyl synthase.